The following is a 159-amino-acid chain: Endoribonuclease YbeY (159 aa).

Zn(2+)-binding residues include histidine 123, histidine 127, and histidine 133.

The protein belongs to the endoribonuclease YbeY family. Zn(2+) is required as a cofactor.

The protein localises to the cytoplasm. Functionally, single strand-specific metallo-endoribonuclease involved in late-stage 70S ribosome quality control and in maturation of the 3' terminus of the 16S rRNA. This Bacillus pumilus (strain SAFR-032) protein is Endoribonuclease YbeY.